A 334-amino-acid chain; its full sequence is GTP 3',8-cyclase (334 aa).

The 227-residue stretch at 13 to 239 folds into the Radical SAM core domain; it reads RFHRKFYYLR…KVKAANDGPA (227 aa). R22 provides a ligand contact to GTP. Positions 29 and 33 each coordinate [4Fe-4S] cluster. Y35 contacts S-adenosyl-L-methionine. C36 contacts [4Fe-4S] cluster. R73 is a GTP binding site. G77 lines the S-adenosyl-L-methionine pocket. Residue T104 coordinates GTP. Residue S128 participates in S-adenosyl-L-methionine binding. Residue K165 participates in GTP binding. Position 199 (M199) interacts with S-adenosyl-L-methionine. Positions 262 and 265 each coordinate [4Fe-4S] cluster. 267–269 serves as a coordination point for GTP; the sequence is RLR. Residue C279 participates in [4Fe-4S] cluster binding.

The protein belongs to the radical SAM superfamily. MoaA family. In terms of assembly, monomer and homodimer. The cofactor is [4Fe-4S] cluster.

The enzyme catalyses GTP + AH2 + S-adenosyl-L-methionine = (8S)-3',8-cyclo-7,8-dihydroguanosine 5'-triphosphate + 5'-deoxyadenosine + L-methionine + A + H(+). The protein operates within cofactor biosynthesis; molybdopterin biosynthesis. Its function is as follows. Catalyzes the cyclization of GTP to (8S)-3',8-cyclo-7,8-dihydroguanosine 5'-triphosphate. This is GTP 3',8-cyclase from Vibrio vulnificus (strain CMCP6).